The chain runs to 490 residues: Capsid protein (490 aa).

The segment at 79 to 143 (GETSEEESDS…TQPKTIPGQK (65 aa)) is disordered. A compositionally biased stretch (acidic residues) spans 81–94 (TSEEESDSGEEPEF). A compositionally biased stretch (basic and acidic residues) spans 95 to 111 (EQVRMDRTGGTEIPKEE). The Nuclear localization signal signature appears at 122–125 (RKRK). Residues 411 to 428 (CRCWICNIEGHYANECPN) form a CCHC-type zinc finger. Residues 464 to 490 (YKEEEEETSTEEDDGSSTSEDSDSESD) form a disordered region. Residues 465–490 (KEEEEETSTEEDDGSSTSEDSDSESD) show a composition bias toward acidic residues.

Belongs to the caulimoviridae capsid protein family. As to quaternary structure, interacts (via nuclear localization signal) with host importin alpha.

The protein resides in the virion. It localises to the host nucleus. Its function is as follows. Self assembles to form an icosahedral capsid, about 50 nm in diameter, nm, composed of 420 subunits of the viral capsid protein. The capsid encapsulates the genomic dsDNA. Following virus entry into host cell, provides nuclear import of the viral genome. Virus particles do not enter the nucleus, but dock at the nuclear membrane through the interaction with host importins. The polypeptide is Capsid protein (Arabidopsis thaliana (Mouse-ear cress)).